A 1069-amino-acid chain; its full sequence is MPLNKDIKRVLVIGSGPIVIGQAAEFDYSGTQACEALKSEGVEVVLINSNPATIMTDKEVADKVYLEPLTLEFIEKVIAKEKPDSLLAGMGGQTGLNLAVELHDAGILDKYNVKVIGTSIESIKEGEDRELFRDMMNRIGEPVIKSEIVTDLQAGIDFANKIGYPVIVRPAYTLGGSGGGIADDEEELRTILESGLQLSTIGQVLLEKSVKGWKEIEYEVMRDSYGNCITVCNMENIDPVGIHTGDSIVVAPSQTLSDKEYQMLRTASINIINAVGIEGGCNVQFSLNPNTFEYAVIEINPRVSRSSALASKATGYPIAKLAAKIALGYGLDEIKNAVTQKTYACFEPTLDYVVVKIPKWPFDKFFGADRQLGTKMMATGEIMAIGANFEQAFLKGIRSLEIGKYSLDHKKFKEHSMSELKDLVMKPDDERIFALAEMLRRDYMIERINKITGIDKFFLEKIKWIVEEEQRLKLSNIEDLDKEWLKNLKKKGFSDKAIADMLKVSPEDIYRLRDIWSIKPSYKMVDTCGGEFEALSPYYYSTYEQYDEVEVSNRRKVIVIGSGPIRIGQGIEFDYASVHCVKALKKLDIETIIVNNNPETVSTDFDISDKLYFEPLTEEDVLNIIEKENPYGVILQFGGQTAIKLANFLKEKNIKTLGTTADQIDMAEDREKFDELLERLDISRPKGKGIWSVEEGLEEAERLGFPVLVRPSYVIGGQGMEITHDEEELTFYLTNAFAKDKKNPILIDKYLMGREIEVDAISDGENILIPGIMEHLERAGVHSGDSVTMYPSQNVCDKIKGKILEYTKKLALAIGIKGMINIQFIEFEGSLYVIEVNPRASRTVPYISKVSGVPIVDIATQVMLGAKLNDLGYGVDIYKEPELISVKVPVFSTQKLPNVEVCLGPEMRSTGEVLGVGRTLKEALYKGFVGANMYPSKEKGKILATINKHNKAEFLPIAKDLAKVGYKFIATTGTCKLLRDEGIDAEEIRKIDEEKPNILDIVKNREVDLVVNTPTKGNDSKRDGFLIRRAAVERNLGVITALDTLRAIADVELEEFDKNKDLEVFDITK.

The carboxyphosphate synthetic domain stretch occupies residues 1–401 (MPLNKDIKRV…AFLKGIRSLE (401 aa)). ATP contacts are provided by arginine 129, arginine 169, glycine 175, glycine 176, lysine 208, valine 210, glutamate 215, glycine 241, isoleucine 242, histidine 243, glutamine 284, and glutamate 298. The ATP-grasp 1 domain occupies 133–327 (RDMMNRIGEP…IAKLAAKIAL (195 aa)). Mg(2+)-binding residues include glutamine 284, glutamate 298, and asparagine 300. Residues glutamine 284, glutamate 298, and asparagine 300 each coordinate Mn(2+). The tract at residues 402–549 (IGKYSLDHKK…YSTYEQYDEV (148 aa)) is oligomerization domain. The interval 550-932 (EVSNRRKVIV…ALYKGFVGAN (383 aa)) is carbamoyl phosphate synthetic domain. An ATP-grasp 2 domain is found at 674–864 (DELLERLDIS…IVDIATQVML (191 aa)). ATP contacts are provided by arginine 710, lysine 749, leucine 751, glutamate 755, glycine 780, valine 781, histidine 782, serine 783, glutamine 823, and glutamate 835. Mg(2+) is bound by residues glutamine 823, glutamate 835, and asparagine 837. Mn(2+) is bound by residues glutamine 823, glutamate 835, and asparagine 837. One can recognise an MGS-like domain in the interval 932–1069 (NMYPSKEKGK…KDLEVFDITK (138 aa)). The allosteric domain stretch occupies residues 933 to 1069 (MYPSKEKGKI…KDLEVFDITK (137 aa)).

It belongs to the CarB family. As to quaternary structure, composed of two chains; the small (or glutamine) chain promotes the hydrolysis of glutamine to ammonia, which is used by the large (or ammonia) chain to synthesize carbamoyl phosphate. Tetramer of heterodimers (alpha,beta)4. Requires Mg(2+) as cofactor. Mn(2+) is required as a cofactor.

The catalysed reaction is hydrogencarbonate + L-glutamine + 2 ATP + H2O = carbamoyl phosphate + L-glutamate + 2 ADP + phosphate + 2 H(+). The enzyme catalyses hydrogencarbonate + NH4(+) + 2 ATP = carbamoyl phosphate + 2 ADP + phosphate + 2 H(+). It participates in amino-acid biosynthesis; L-arginine biosynthesis; carbamoyl phosphate from bicarbonate: step 1/1. Its pathway is pyrimidine metabolism; UMP biosynthesis via de novo pathway; (S)-dihydroorotate from bicarbonate: step 1/3. Large subunit of the glutamine-dependent carbamoyl phosphate synthetase (CPSase). CPSase catalyzes the formation of carbamoyl phosphate from the ammonia moiety of glutamine, carbonate, and phosphate donated by ATP, constituting the first step of 2 biosynthetic pathways, one leading to arginine and/or urea and the other to pyrimidine nucleotides. The large subunit (synthetase) binds the substrates ammonia (free or transferred from glutamine from the small subunit), hydrogencarbonate and ATP and carries out an ATP-coupled ligase reaction, activating hydrogencarbonate by forming carboxy phosphate which reacts with ammonia to form carbamoyl phosphate. The protein is Carbamoyl phosphate synthase large chain of Clostridium botulinum (strain Alaska E43 / Type E3).